A 780-amino-acid chain; its full sequence is Mediator of RNA polymerase II transcription subunit 15 (780 aa).

The interval 1-124 (MSEEDWPSPK…PQPTSAQARN (124 aa)) is interaction with nhr-49. Positions 2–96 (SEEDWPSPKF…SPPCTTAALL (95 aa)) are interaction with sbp-1. Disordered stretches follow at residues 91 to 152 (TTAA…APSA), 166 to 363 (PSPD…QGMM), and 564 to 597 (GPGP…GTPN). Over residues 125–139 (PPVTVATTQASTTPS) the composition is skewed to low complexity. Residues 225–245 (PPNGYGGYGMMNGPPGSGAPM) are compositionally biased toward gly residues. Positions 296–316 (QGATPTGPSSVLESLINQPQQ) are enriched in polar residues. Low complexity-rich tracts occupy residues 333–353 (AAQR…QQQR) and 574–594 (SMSG…NPMG).

It belongs to the Mediator complex subunit 15 family. As to quaternary structure, component of the Mediator complex. Interacts with nhr-49, nhr-64 and sbp-1. Expressed in the intestine and head neurons.

Its subcellular location is the nucleus. Its function is as follows. Component of the Mediator complex, a coactivator involved in regulated gene transcription of nearly all RNA polymerase II-dependent genes. Mediator functions as a bridge to convey information from gene-specific regulatory proteins to the basal RNA polymerase II transcription machinery. Mediator is recruited to promoters by direct interactions with regulatory proteins and serves as a scaffold for the assembly of a functional preinitiation complex with RNA polymerase II and the general transcription factors. Required for regulated expression of genes controlling fatty acid desaturation by transcription factors including sbp-1 and nhr-49. Involved in the response to simulated microgravity, in concert with sbp-1, probably acting in the intestine. This is Mediator of RNA polymerase II transcription subunit 15 (mdt-15) from Caenorhabditis elegans.